Consider the following 149-residue polypeptide: Probable flagellum biosynthesis repressor protein FlbT (149 aa).

This sequence belongs to the FlbT family.

In terms of biological role, has a post-transcriptional repressor function in flagellum biogenesis. Associates with the 5'-UTR of fljK mRNA and promotes its degradation. This Rhizobium leguminosarum bv. trifolii (strain WSM2304) protein is Probable flagellum biosynthesis repressor protein FlbT.